The sequence spans 326 residues: Beta-ketoacyl-[acyl-carrier-protein] synthase III (326 aa).

Catalysis depends on residues Cys-113 and His-253. Residues 254-258 form an ACP-binding region; sequence QANIR. Asn-283 is a catalytic residue.

Belongs to the thiolase-like superfamily. FabH family. As to quaternary structure, homodimer.

It is found in the cytoplasm. It catalyses the reaction malonyl-[ACP] + acetyl-CoA + H(+) = 3-oxobutanoyl-[ACP] + CO2 + CoA. Its pathway is lipid metabolism; fatty acid biosynthesis. In terms of biological role, catalyzes the condensation reaction of fatty acid synthesis by the addition to an acyl acceptor of two carbons from malonyl-ACP. Catalyzes the first condensation reaction which initiates fatty acid synthesis and may therefore play a role in governing the total rate of fatty acid production. Possesses both acetoacetyl-ACP synthase and acetyl transacylase activities. Its substrate specificity determines the biosynthesis of branched-chain and/or straight-chain of fatty acids. This Wolbachia sp. subsp. Brugia malayi (strain TRS) protein is Beta-ketoacyl-[acyl-carrier-protein] synthase III.